Reading from the N-terminus, the 208-residue chain is Meiotically up-regulated gene 9 protein (208 aa).

The disordered stretch occupies residues 77-114 (VPASNEKAARVSNLKTVPSLKRENKEVNANSKPPVKQQ).

Its function is as follows. Has a role in meiosis. This Schizosaccharomyces pombe (strain 972 / ATCC 24843) (Fission yeast) protein is Meiotically up-regulated gene 9 protein (mug9).